The following is a 466-amino-acid chain: Ras GTPase-activating protein-binding protein 1 (466 aa).

The NTF2 domain occupies 11-133 (VGREFVRQYY…FYVHNDIFRY (123 aa)). Residues Lys-36, Lys-50, Lys-59, Lys-64, Lys-76, and Lys-123 each participate in a glycyl lysine isopeptide (Lys-Gly) (interchain with G-Cter in ubiquitin) cross-link. The segment at 142-225 (VTEPQEESEE…EPVLEETVPE (84 aa)) is acidic disordered region. Thr-143 carries the phosphothreonine modification. Disordered regions lie at residues 144-172 (EPQE…DSGT) and 184-243 (EEHL…QTVQ). 2 stretches are compositionally biased toward acidic residues: residues 145–157 (PQEE…EEPE) and 185–206 (EHLE…EQEP). Phosphoserine is present on Ser-149. 4 positions are modified to phosphoserine: Ser-231, Ser-232, Ser-250, and Ser-253. The disordered stretch occupies residues 255–329 (TSKNLPPSGA…REAGEQGDIE (75 aa)). 2 stretches are compositionally biased toward basic and acidic residues: residues 297 to 307 (PQRDQRVREQR) and 318 to 329 (PIREAGEQGDIE). Residues 340-415 (HQLFIGNLPH…VRLNVEEKKT (76 aa)) form the RRM domain. Glycyl lysine isopeptide (Lys-Gly) (interchain with G-Cter in ubiquitin) cross-links involve residues Lys-353 and Lys-357. Ser-373 is subject to Phosphoserine. A Glycyl lysine isopeptide (Lys-Gly) (interchain with G-Cter in ubiquitin) cross-link involves residue Lys-376. Lys-376 is subject to N6-acetyllysine; alternate. Lys-376 participates in a covalent cross-link: Glycyl lysine isopeptide (Lys-Gly) (interchain with G-Cter in SUMO2); alternate. Lys-393 is covalently cross-linked (Glycyl lysine isopeptide (Lys-Gly) (interchain with G-Cter in ubiquitin); alternate). Positions 410–466 (VEEKKTRAAREGDRRDNRLRGPGGPRGGLGGGMRGPPRGGMVQKPGFGVGRGLAPRQ) are RG-rich region. Residues 413–428 (KKTRAAREGDRRDNRL) show a composition bias toward basic and acidic residues. The interval 413–466 (KKTRAAREGDRRDNRLRGPGGPRGGLGGGMRGPPRGGMVQKPGFGVGRGLAPRQ) is disordered. At Arg-429 the chain carries Asymmetric dimethylarginine. Over residues 430–447 (GPGGPRGGLGGGMRGPPR) the composition is skewed to gly residues. At Arg-435 the chain carries Asymmetric dimethylarginine; alternate. Arg-435, Arg-447, Arg-460, and Arg-465 each carry omega-N-methylarginine; alternate. Arg-460 bears the Dimethylated arginine; alternate mark.

As to quaternary structure, homodimer and oligomer. Component of a TAU mRNP complex, at least composed of IGF2BP1, ELAVL4 and G3BP1. Binds to the SH3 domain of Ras GTPase-activating protein (RASA1) in proliferating cells. No interaction in quiescent cells. Interacts (via NTF2 domain) with USP10; inhibiting stress granule formation by lowering G3BP1 valence. Interacts (via NTF2 domain) with CAPRIN1; promoting stress granule formation by lowering the saturation-concentration of G3BP1. Interacts (via NTF2 domain) with UBAP2L; promoting stress granule formation. Associates (via RG-rich region) with 40S ribosome subunits. Interacts with RPTOR and SPAG5; this complex is increased by oxidative stress. Interacts with ATXN2L. Interacts with STYXL1. Interacts with CGAS (via N-terminus); this interaction promotes the DNA-binding and activation of CGAS. Interacts (via C-terminus) with RIGI. Interacts with PABPC1. Interacts with QKI (isoforms QKI6 and QKI7); directing N(7)-methylguanine-containing mRNAs to stress granules. Mg(2+) is required as a cofactor. In terms of processing, phosphorylation of the acidic disordered region regulates stress granule assembly. RASA1-dependent phosphorylation of Ser-149 induces a conformational change that prevents self-association. Dephosphorylation after HRAS activation is required for stress granule assembly. Ser-149 phosphorylation induces partial nuclear localization. Post-translationally, arg-435 is dimethylated, probably to asymmetric dimethylarginine. Ubiquitinated by TRIM21 via 'Lys-63'-linked polyubiquitination in the NTF2 domain in response to heat shock, leading to stress granule disassembly: ubiquitination promotes interaction with the FAF2 adapter, followed by interaction with VCP, which extracts G3BP1 from stress granules, leading to stress granule disassembly. In case of prolonged stress, ubiquitination by TRIM21 leads to autophagy-dependent degradation of G3BP1 via recruitment of ubiquitinated G3BP1 by SQSTM1 and/or CALCOCO2 to autophagosomes.

The protein localises to the cytoplasm. It localises to the cytosol. It is found in the perikaryon. The protein resides in the stress granule. Its subcellular location is the nucleus. It catalyses the reaction ATP + H2O = ADP + phosphate + H(+). Its activity is regulated as follows. Under physiological conditions, G3BP1 adopts a compact state that is stabilized by intramolecular interactions between the RG-rich and the acidic regions that inhibit phase separation. Upon stress, polysomes disassemble and mRNAs are released in an unfolded protein-free state. Binding of unfolded mRNA to G3BP1 outcompetes the intramolecular interactions and RNA-bound G3BP1 adopts an expanded conformation in which the RG-rich region becomes exposed to engage in protein-protein and protein-RNA interactions, allowing physical cross-linking of RNA molecules to form protein-RNA condensates, leading to liquid-liquid phase separation (LLPS). Functionally, protein involved in various processes, such as stress granule formation and innate immunity. Plays an essential role in stress granule formation. Stress granules are membraneless compartments that store mRNAs and proteins, such as stalled translation pre-initiation complexes, in response to stress. Promotes formation of stress granules phase-separated membraneless compartment by undergoing liquid-liquid phase separation (LLPS) upon unfolded RNA-binding: functions as a molecular switch that triggers RNA-dependent LLPS in response to a rise in intracellular free RNA concentrations. Also acts as an ATP- and magnesium-dependent helicase: unwinds DNA/DNA, RNA/DNA, and RNA/RNA substrates with comparable efficiency. Acts unidirectionally by moving in the 5' to 3' direction along the bound single-stranded DNA. Unwinds preferentially partial DNA and RNA duplexes having a 17 bp annealed portion and either a hanging 3' tail or hanging tails at both 5'- and 3'-ends. Plays an essential role in innate immunity by promoting CGAS and RIGI activity. Participates in the DNA-triggered cGAS/STING pathway by promoting the DNA binding and activation of CGAS. Triggers the condensation of cGAS, a process probably linked to the formation of membrane-less organelles. Also enhances RIGI-induced type I interferon production probably by helping RIGI at sensing pathogenic RNA. May also act as a phosphorylation-dependent sequence-specific endoribonuclease in vitro: Cleaves exclusively between cytosine and adenine and cleaves MYC mRNA preferentially at the 3'-UTR. In Pongo abelii (Sumatran orangutan), this protein is Ras GTPase-activating protein-binding protein 1 (G3BP1).